The primary structure comprises 162 residues: Corticoliberin (162 aa).

The N-terminal stretch at 1 to 24 (MKFQLWVSTGILLVSLLPCHECRA) is a signal peptide. Positions 25-119 (FIKSPASSPG…QEDPTEKAKR (95 aa)) are excised as a propeptide. The disordered stretch occupies residues 91–122 (SQPGMRAASLDGADSPYSAQEDPTEKAKRAEE). Residues 113–122 (PTEKAKRAEE) show a composition bias toward basic and acidic residues. Isoleucine amide is present on I160.

It belongs to the sauvagine/corticotropin-releasing factor/urotensin I family.

Its subcellular location is the secreted. This hormone from hypothalamus regulates the release of corticotropin from pituitary gland. The protein is Corticoliberin (crh) of Xenopus laevis (African clawed frog).